The chain runs to 366 residues: Bacteriochlorophyll a protein (366 aa).

5 residues coordinate bacteriochlorophyll a: H110, H145, H290, H297, and H298.

Homotrimer. Each subunit contains 7 molecules of bacteriochlorophyll a.

In terms of biological role, intermediary in the transfer of excitation energy from the chlorophyll to the reaction centers. In Prosthecochloris aestuarii, this protein is Bacteriochlorophyll a protein.